An 873-amino-acid polypeptide reads, in one-letter code: Envelope glycoprotein B (873 aa).

The N-terminal stretch at 1–21 (MASLKMLICVCVAILIPSTLS) is a signal peptide. Residues 22 to 740 (QDSHGIAGII…SGIASFLSNP (719 aa)) are Virion surface-facing. 5 disulfide bridges follow: Cys67-Cys525, Cys84-Cys481, Cys157-Cys219, Cys311-Cys359, and Cys548-Cys598. 2 N-linked (GlcNAc...) asparagine; by host glycosylation sites follow: Asn92 and Asn111. Residues 124–130 (TWALFSR) are involved in fusion and/or binding to host membrane. Residue Asn201 is glycosylated (N-linked (GlcNAc...) asparagine; by host). The involved in fusion and/or binding to host membrane stretch occupies residues 206 to 213 (HQTLGYRT). Asn252 and Asn350 each carry an N-linked (GlcNAc...) asparagine; by host glycan. Positions 418–447 (QNHLPRGRERRQAAGRRTASLQSGPQGDRI) are disordered. 3 N-linked (GlcNAc...) asparagine; by host glycosylation sites follow: Asn569, Asn625, and Asn639. Hydrophobic membrane proximal region regions lie at residues 684 to 738 (IDTV…SFLS) and 715 to 734 (LGTVVMTAAAAVISTVSGIA). The chain crosses the membrane as a helical span at residues 741–761 (FAALGIGIAVVVSIILGLLAF). Residues 762-873 (KYVMNLKSNP…PSWAEESEDE (112 aa)) lie on the Intravirion side of the membrane. The segment at 781 to 807 (PPAGTPPRPSRRYYKDEEEVEEDSDED) is disordered. The segment covering 796-807 (DEEEVEEDSDED) has biased composition (acidic residues). Positions 858 to 861 (YPLL) match the Internalization motif motif.

Belongs to the herpesviridae glycoprotein B family. As to quaternary structure, homotrimer; disulfide-linked. Binds to heparan sulfate proteoglycans. Interacts with gH/gL heterodimer. Post-translationally, a proteolytic cleavage by host furin generates two subunits that remain linked by disulfide bonds.

The protein resides in the virion membrane. It is found in the host cell membrane. It localises to the host endosome membrane. The protein localises to the host Golgi apparatus membrane. Its function is as follows. Envelope glycoprotein that forms spikes at the surface of virion envelope. Essential for the initial attachment to heparan sulfate moieties of the host cell surface proteoglycans. Involved in fusion of viral and cellular membranes leading to virus entry into the host cell. Following initial binding to its host receptors, membrane fusion is mediated by the fusion machinery composed at least of gB and the heterodimer gH/gL. May be involved in the fusion between the virion envelope and the outer nuclear membrane during virion egress. This is Envelope glycoprotein B from Infectious laryngotracheitis virus (strain 632) (ILTV).